Here is a 284-residue protein sequence, read N- to C-terminus: Nucleotide-binding protein Sbal_3671 (284 aa).

8 to 15 is an ATP binding site; that stretch reads GRSGSGKS. 56–59 serves as a coordination point for GTP; it reads DVRN.

Belongs to the RapZ-like family.

In terms of biological role, displays ATPase and GTPase activities. The polypeptide is Nucleotide-binding protein Sbal_3671 (Shewanella baltica (strain OS155 / ATCC BAA-1091)).